Here is a 234-residue protein sequence, read N- to C-terminus: Large ribosomal subunit protein uL1c (234 aa).

This sequence belongs to the universal ribosomal protein uL1 family. In terms of assembly, part of the 50S ribosomal subunit.

The protein localises to the plastid. Its subcellular location is the chloroplast. Binds directly to 23S rRNA. Might be involved in E site tRNA release (Potential). The protein is Large ribosomal subunit protein uL1c (rpl1) of Rhodomonas salina (Cryptomonas salina).